The primary structure comprises 479 residues: Ribosomal RNA small subunit methyltransferase F (479 aa).

Residues 125 to 131, E149, D176, and D194 each bind S-adenosyl-L-methionine; that span reads AAAPGSK. C247 acts as the Nucleophile in catalysis.

This sequence belongs to the class I-like SAM-binding methyltransferase superfamily. RsmB/NOP family.

The protein resides in the cytoplasm. It catalyses the reaction cytidine(1407) in 16S rRNA + S-adenosyl-L-methionine = 5-methylcytidine(1407) in 16S rRNA + S-adenosyl-L-homocysteine + H(+). Functionally, specifically methylates the cytosine at position 1407 (m5C1407) of 16S rRNA. This Escherichia coli O127:H6 (strain E2348/69 / EPEC) protein is Ribosomal RNA small subunit methyltransferase F.